The primary structure comprises 686 residues: MAKKHAGADANDSDYNEEPNFEDPPGFVDTISDEDLLGDMLAQRPSEADGVESVVVVDNIPKVEPVRLEKLKSVINKLFSHCGDIVNVVYPVDEEGKTKGYAFMEYKHASQAEDAVKKLNNHRLDKNHTFAVNLFTDFQKYENIPEKWEPPTIQTFKVQSDLYNFINDPDAYDQYCVAAETAPNCVQVGFWQNTLPEPSELETRERFTDTFVKWSPLGTYVVTFHKPGVAIWGGSNFQKIQKFPHPGTQFVEFSPCENYLVTYGPTPTGQKIIIWDIRTGAEKRSFVADGMSVLSMFRWSHDDKFVARMGENSIHIYETPSFYLLDLKSIKIPGIRGFSWSPTDNVIAYWVEEQNQIPARVTLMEIPKKREIRNKNLFHVADCKLHWQKSGDYLCVKVDRYSKLKKDKKELDVKFLGMFYNFEIFHMREKEIPVDSVEIRELILAFAWEPIGNKFSIIHGEPNSSNVSFYEVNKGVKPSLVKRLEKKSCTHLFWSPRGQFIVMANLTMGTFEFVDSTNDYIISASPDHFRASEVEWDPTGRYVVTGVSSWKVKEDTGFNMYTFQGRIIKRTILKNFVQFLWRPRPPTLLAEEKQKEIKKNLKKYYAVFEQKDRLRLTRASKELLEKRAQLRETFMEYRNKRIAEWKDQKSRRVMLRGHVDTDNLETEEVDEEIVEFLVKEEITLLE.

Residues 1–29 form a disordered region; that stretch reads MAKKHAGADANDSDYNEEPNFEDPPGFVD. A compositionally biased stretch (acidic residues) spans 11–21; that stretch reads NDSDYNEEPNF. Positions 53–137 constitute an RRM domain; it reads SVVVVDNIPK…HTFAVNLFTD (85 aa). WD repeat units follow at residues 203-242, 289-327, 330-365, 438-480, and 526-571; these read TRER…KIQK, DGMS…LLDL, IKIP…TLME, EIRE…KPSL, and PDHF…IKRT. The stretch at 590 to 642 forms a coiled coil; that stretch reads AEEKQKEIKKNLKKYYAVFEQKDRLRLTRASKELLEKRAQLRETFMEYRNKRI.

Belongs to the eIF-3 subunit B family. As to quaternary structure, component of the eukaryotic translation initiation factor 3 (eIF-3) complex. The eIF-3 complex interacts with pix. Interacts with mxt.

Its subcellular location is the cytoplasm. RNA-binding component of the eukaryotic translation initiation factor 3 (eIF-3) complex, which is involved in protein synthesis of a specialized repertoire of mRNAs and, together with other initiation factors, stimulates binding of mRNA and methionyl-tRNAi to the 40S ribosome. The eIF-3 complex specifically targets and initiates translation of a subset of mRNAs involved in cell proliferation. This chain is Eukaryotic translation initiation factor 3 subunit B, found in Drosophila ananassae (Fruit fly).